A 732-amino-acid polypeptide reads, in one-letter code: X-ray repair cross-complementing protein 5 (732 aa).

The VWFA domain occupies 9–161 (AVVLCVDVGV…CNLKKSGISL (153 aa)). Positions 138–165 (LSSPFSQDQLDVIICNLKKSGISLQFFL) are leucine-zipper. Lys-195 participates in a covalent cross-link: Glycyl lysine isopeptide (Lys-Gly) (interchain with G-Cter in SUMO2). In terms of domain architecture, Ku spans 253–453 (IGPNLSIKIV…CTPTEAQLSA (201 aa)). A Phosphoserine modification is found at Ser-258. The residue at position 265 (Lys-265) is an N6-acetyllysine. Ser-318 is subject to Phosphoserine. Lys-332 bears the N6-acetyllysine mark. Residues Lys-532 and Lys-534 each participate in a glycyl lysine isopeptide (Lys-Gly) (interchain with G-Cter in SUMO2) cross-link. Phosphothreonine is present on Thr-535. Residues Lys-567 and Lys-569 each participate in a glycyl lysine isopeptide (Lys-Gly) (interchain with G-Cter in SUMO2) cross-link. 3 positions are modified to phosphoserine; by PRKDC: Ser-578, Ser-580, and Ser-581. N6-acetyllysine is present on Lys-666. Glycyl lysine isopeptide (Lys-Gly) (interchain with G-Cter in SUMO2) cross-links involve residues Lys-670 and Lys-689. Residues 708–732 (PKDKAKEDTTGPEEAGDVDDLLDMI) form a disordered region. The residue at position 716 (Thr-716) is a Phosphothreonine; by PRKDC. Over residues 717 to 732 (TGPEEAGDVDDLLDMI) the composition is skewed to acidic residues. The EEXXXDL motif signature appears at 720 to 728 (EEAGDVDDL).

It belongs to the ku80 family. As to quaternary structure, heterodimer composed of XRCC5/Ku80 and XRCC6/Ku70. Component of the core long-range non-homologous end joining (NHEJ) complex (also named DNA-PK complex) composed of PRKDC, LIG4, XRCC4, XRCC6/Ku70, XRCC5/Ku86 and NHEJ1/XLF. Additional component of the NHEJ complex includes PAXX. Following autophosphorylation, PRKDC dissociates from DNA, leading to formation of the short-range NHEJ complex, composed of LIG4, XRCC4, XRCC6/Ku70, XRCC5/Ku86 and NHEJ1/XLF. The XRCC5-XRCC6 dimer also associates with NAA15, and this complex displays DNA binding activity towards the osteocalcin FGF response element (OCFRE). In addition, XRCC5 binds to the osteoblast-specific transcription factors MSX2 and RUNX2. Interacts with ELF3. Interacts with APLF (via KBM motif). The XRCC5/XRCC6 dimer associates in a DNA-dependent manner with APEX1. Identified in a complex with DEAF1 and XRCC6. Interacts with NR4A3; the DNA-dependent protein kinase complex DNA-PK phosphorylates and activates NR4A3 and prevents NR4A3 ubiquitinylation and degradation. Interacts with RNF138. Interacts with CYREN (via KBM motif). Interacts with WRN (via KBM motif). Interacts (via N-terminus) with HSF1 (via N-terminus); this interaction is direct and prevents XRCC5/XRCC6 heterodimeric binding and non-homologous end joining (NHEJ) repair activities induced by ionizing radiation (IR). Interacts with DHX9; this interaction occurs in a RNA-dependent manner. Part of the HDP-RNP complex composed of at least HEXIM1, PRKDC, XRCC5, XRCC6, paraspeckle proteins (SFPQ, NONO, PSPC1, RBM14, and MATR3) and NEAT1 RNA. Interacts with ERCC6. Interacts with ATF7. The XRCC5-XRCC6 dimer associates with ALKBH2. Interacts with TPRN; TPRN interacts with a number of DNA damage response proteins, is recruited to sites of DNA damage and may play a role in DNA damage repair. Interacts with ERCC6L2. In terms of processing, ADP-ribosylated by PARP3. Post-translationally, phosphorylated on serine residues. Phosphorylation by PRKDC may enhance helicase activity. Sumoylated. In terms of processing, ubiquitinated by RNF8 via 'Lys-48'-linked ubiquitination following DNA damage, leading to its degradation and removal from DNA damage sites. Ubiquitinated by RNF138, leading to remove the Ku complex from DNA breaks.

The protein localises to the nucleus. It localises to the nucleolus. The protein resides in the chromosome. In terms of biological role, single-stranded DNA-dependent ATP-dependent helicase that plays a key role in DNA non-homologous end joining (NHEJ) by recruiting DNA-PK to DNA. Required for double-strand break repair and V(D)J recombination. Also has a role in chromosome translocation. The DNA helicase II complex binds preferentially to fork-like ends of double-stranded DNA in a cell cycle-dependent manner. It works in the 3'-5' direction. During NHEJ, the XRCC5-XRRC6 dimer performs the recognition step: it recognizes and binds to the broken ends of the DNA and protects them from further resection. Binding to DNA may be mediated by XRCC6. The XRCC5-XRRC6 dimer acts as a regulatory subunit of the DNA-dependent protein kinase complex DNA-PK by increasing the affinity of the catalytic subunit PRKDC to DNA by 100-fold. The XRCC5-XRRC6 dimer is probably involved in stabilizing broken DNA ends and bringing them together. The assembly of the DNA-PK complex to DNA ends is required for the NHEJ ligation step. The XRCC5-XRRC6 dimer probably also acts as a 5'-deoxyribose-5-phosphate lyase (5'-dRP lyase), by catalyzing the beta-elimination of the 5' deoxyribose-5-phosphate at an abasic site near double-strand breaks. XRCC5 probably acts as the catalytic subunit of 5'-dRP activity, and allows to 'clean' the termini of abasic sites, a class of nucleotide damage commonly associated with strand breaks, before such broken ends can be joined. The XRCC5-XRRC6 dimer together with APEX1 acts as a negative regulator of transcription. In association with NAA15, the XRCC5-XRRC6 dimer binds to the osteocalcin promoter and activates osteocalcin expression. As part of the DNA-PK complex, involved in the early steps of ribosome assembly by promoting the processing of precursor rRNA into mature 18S rRNA in the small-subunit processome. Binding to U3 small nucleolar RNA, recruits PRKDC and XRCC5/Ku86 to the small-subunit processome. Plays a role in the regulation of DNA virus-mediated innate immune response by assembling into the HDP-RNP complex, a complex that serves as a platform for IRF3 phosphorylation and subsequent innate immune response activation through the cGAS-STING pathway. This is X-ray repair cross-complementing protein 5 (Xrcc5) from Mus musculus (Mouse).